The chain runs to 847 residues: Capsid-associated protein AC83 (847 aa).

The first 19 residues, 1–19, serve as a signal peptide directing secretion; the sequence is MMSGVMLLMLAIFLIIAFT. A C2HC BV-type zinc finger spans residues 148-197; that stretch reads CVPVPPCDNKSAGLYPMDERLLDTLVLNQHLDKDYSTNAHLYHPTFYLRC. 2 N-linked (GlcNAc...) asparagine; by host glycosylation sites follow: asparagine 156 and asparagine 211. 2 disulfides stabilise this stretch: cysteine 208–cysteine 221 and cysteine 261–cysteine 274. Residues 224–282 form the Chitin-binding type-2 domain; that stretch reads NELCENRPDGYILSYFPSNLLVNQFMQCVNGRHVVGECPANKIFDRNLMSCVEAHPCAF. 6 N-linked (GlcNAc...) asparagine; by host glycosylation sites follow: asparagine 306, asparagine 337, asparagine 500, asparagine 592, asparagine 613, and asparagine 639. A disordered region spans residues 665–698; it reads DHWVVAPPTAPPPPPEPEPEPEPEPEPEPELPSP. Residues 681–693 are compositionally biased toward acidic residues; it reads PEPEPEPEPEPEP.

It localises to the virion. In terms of biological role, plays an essential role in nucleocapsid assembly. Essential for the establishment of efficient per os infection. In Autographa californica nuclear polyhedrosis virus (AcMNPV), this protein is Capsid-associated protein AC83 (p95).